Here is a 245-residue protein sequence, read N- to C-terminus: MAKRKEVTEISEMDIKKSGFVNRLYRETCDISNKYIKFDDDGDKLIIPNKIDFIKKALNKISSTKDYSSFVRQLNNYGFTKIKLDNGDSNCDIYYHQNFHRDHPDLISLITRDKSKNGDYKDNMTTFINSLQYLASCNYKQQKEINDLKDRIKTLETKYATLYEIISNAFRQGIEQYQKHNTMYFNNNSLLKNMFTYNQELDDLKDNTNVYNNAKLINQLKLDAKNSNQDDNIKKTKNAFDEFYF.

A DNA-binding region spans residues 17-115 (KSGFVNRLYR…LISLITRDKS (99 aa)). An involved in trimerization region spans residues 130–169 (SLQYLASCNYKQQKEINDLKDRIKTLETKYATLYEIISNA).

Belongs to the HSF family. Homotrimer. Homotrimerization increases the affinity of HSF1 to DNA.

Its subcellular location is the nucleus. DNA-binding transcription factor that specifically binds heat shock promoter elements (HSE) and activates transcription. This chain is Heat shock transcription factor, found in Enterocytozoon bieneusi (strain H348) (Microsporidian parasite).